The primary structure comprises 287 residues: Phycobilisome 32.1 kDa linker polypeptide, phycocyanin-associated, rod (287 aa).

Residues 2–180 (AITAAASRLG…LYRGYANSDR (179 aa)) enclose the PBS-linker domain. In terms of domain architecture, CpcD-like spans 235–287 (GRVYRIEVAGIRQPGYPGVRRSSTAFLVPYEQLSAKMQQLQRTGARIISVNPA).

This sequence belongs to the phycobilisome linker protein family.

Its subcellular location is the cellular thylakoid membrane. Functionally, rod linker protein, associated with phycocyanin. Linker polypeptides determine the state of aggregation and the location of the disk-shaped phycobiliprotein units within the phycobilisome and modulate their spectroscopic properties in order to mediate a directed and optimal energy transfer. This chain is Phycobilisome 32.1 kDa linker polypeptide, phycocyanin-associated, rod (cpcC), found in Thermosynechococcus vestitus (strain NIES-2133 / IAM M-273 / BP-1).